The following is a 530-amino-acid chain: T-complex protein 1 subunit zeta-2 (530 aa).

It belongs to the TCP-1 chaperonin family. Component of the chaperonin-containing T-complex (TRiC), a heterooligomeric complex of about 850 to 900 kDa that forms two stacked rings, 12 to 16 nm in diameter. Testis-specific.

It localises to the cytoplasm. Component of the chaperonin-containing T-complex (TRiC), a molecular chaperone complex that assists the folding of proteins upon ATP hydrolysis. The chain is T-complex protein 1 subunit zeta-2 (CCT6B) from Homo sapiens (Human).